An 85-amino-acid polypeptide reads, in one-letter code: Coiled-coil-helix-coiled-coil-helix domain-containing protein 7 (85 aa).

Residues 13-55 (INPCLSESDASTRCLDENNYDKERCSTYFLKYKNCRKFWHSIM) enclose the CHCH domain. Short sequence motifs (cx9C motif) lie at residues 16 to 26 (CLSESDASTRC) and 37 to 47 (CSTYFLKYKNC). Intrachain disulfides connect Cys-16-Cys-47 and Cys-26-Cys-37.

The protein belongs to the CHCHD7 family. In terms of assembly, monomer.

It is found in the mitochondrion intermembrane space. The polypeptide is Coiled-coil-helix-coiled-coil-helix domain-containing protein 7 (CHCHD7) (Macaca fascicularis (Crab-eating macaque)).